The chain runs to 246 residues: AA9 family lytic polysaccharide monooxygenase D (246 aa).

The signal sequence occupies residues 1-19 (MHLLSLLFPVIALIPTVLS). A Cu(2+)-binding site is contributed by His-20. Cys-78 and Cys-196 are joined by a disulfide. Asn-86, Asn-141, and Asn-156 each carry an N-linked (GlcNAc...) asparagine glycan. His-182 and Gln-191 together coordinate O2. Tyr-193 is a binding site for Cu(2+). The N-linked (GlcNAc...) asparagine glycan is linked to Asn-235.

Belongs to the polysaccharide monooxygenase AA9 family. Cu(2+) serves as cofactor.

The protein localises to the secreted. The enzyme catalyses [(1-&gt;4)-beta-D-glucosyl]n+m + reduced acceptor + O2 = 4-dehydro-beta-D-glucosyl-[(1-&gt;4)-beta-D-glucosyl]n-1 + [(1-&gt;4)-beta-D-glucosyl]m + acceptor + H2O.. In terms of biological role, lytic polysaccharide monooxygenase (LPMO) that depolymerizes crystalline and amorphous polysaccharides via the oxidation of scissile alpha- or beta-(1-4)-glycosidic bonds, yielding C1 and C4 oxidation products. Catalysis by LPMOs requires the reduction of the active-site copper from Cu(II) to Cu(I) by a reducing agent and H(2)O(2) or O(2) as a cosubstrate. This Botryotinia fuckeliana (strain B05.10) (Noble rot fungus) protein is AA9 family lytic polysaccharide monooxygenase D.